The chain runs to 563 residues: Nigrin b (563 aa).

A signal peptide spans 1-25 (MRVVAAAMLYFYIVVLAICSVGIQG). The active site involves E188. N-linked (GlcNAc...) asparagine glycosylation is present at N221. Intrachain disulfides connect C274-C302, C319-C338, and C360-C377. Ricin B-type lectin domains follow at residues 305–431 (RTSF…WTVT) and 434–559 (VKPI…WVTQ). One copy of the 1-alpha repeat lies at 316-356 (DGLCVDVRNGYDTDGTPLQLWPCGTQRNQRWTFDSDDTIRS). The stretch at 357–397 (MGKCMTANGLNNGSNIVIFNCSTAAENAIKWEVPIDGSIIN) is one 1-beta repeat. N-linked (GlcNAc...) asparagine glycans are attached at residues N368 and N376. The stretch at 400-432 (SGLVMTAPRAASRTILLLEDNIYAASQGWTVTN) is one 1-gamma repeat. The stretch at 445–482 (KEMCLQSNGENNGVWMEDCEATSLQQQWALYGDRTIRV) is one 2-alpha repeat. A disulfide bond links C448 and C463. A glycan (N-linked (GlcNAc...) asparagine) is linked at N483. The 2-beta repeat unit spans residues 486 to 524 (RGLCVTTNGYNSKDLIIILKCQGLPSQRWFFNSDGAIVN). An intrachain disulfide couples C489 to C506. A 2-gamma repeat occupies 527 to 554 (SRHVMDVRASNVSLREIIIFPATGNPNQ). N-linked (GlcNAc...) asparagine glycosylation occurs at N537.

This sequence in the N-terminal section; belongs to the ribosome-inactivating protein family. Type 2 RIP subfamily. Disulfide-linked dimer of A and B chains.

The catalysed reaction is Endohydrolysis of the N-glycosidic bond at one specific adenosine on the 28S rRNA.. In terms of biological role, non-toxic type 2 RIP which strongly inhibits mammalian protein synthesis but does not affect plant nor bacterial protein synthesis. The A chain is responsible for inhibiting protein synthesis through the catalytic inactivation of 60S ribosomal subunits by removing adenine from position 4,324 of 28S rRNA. Functionally, the B chain is a galactose-specific lectin that facilitates the binding of nigrin b to the cell membrane that precedes endocytosis. This Sambucus nigra (European elder) protein is Nigrin b.